The following is a 226-amino-acid chain: Late protein I226R (226 aa).

The signal sequence occupies residues 1–16; sequence MKMETFLVCLFHNADG. Asparagine 142 and asparagine 164 each carry an N-linked (GlcNAc...) asparagine; by host glycan.

This sequence belongs to the asfivirus I226R family.

Plays a role in the inhibition of host NF-kappa-B and IRF3 signaling pathways. Mechanistically, promotes the degradation of host IKBKG through enhancing its ubiquitination leading to inhibition of both pathways. The chain is Late protein I226R from African swine fever virus (isolate Tick/South Africa/Pretoriuskop Pr4/1996) (ASFV).